The chain runs to 782 residues: E3 UFM1-protein ligase 1 homolog (782 aa).

Residues 404–478 (NVSTQELEDE…SRGGGGASKK (75 aa)) form a disordered region.

This sequence belongs to the UFL1 family.

In terms of biological role, E3 UFM1-protein ligase that mediates ufmylation of target proteins. In Drosophila melanogaster (Fruit fly), this protein is E3 UFM1-protein ligase 1 homolog.